The sequence spans 248 residues: Ubiquinone biosynthesis O-methyltransferase (248 aa).

The S-adenosyl-L-methionine site is built by arginine 41, glycine 72, aspartate 93, and methionine 136.

This sequence belongs to the methyltransferase superfamily. UbiG/COQ3 family.

The enzyme catalyses a 3-demethylubiquinol + S-adenosyl-L-methionine = a ubiquinol + S-adenosyl-L-homocysteine + H(+). The catalysed reaction is a 3-(all-trans-polyprenyl)benzene-1,2-diol + S-adenosyl-L-methionine = a 2-methoxy-6-(all-trans-polyprenyl)phenol + S-adenosyl-L-homocysteine + H(+). It functions in the pathway cofactor biosynthesis; ubiquinone biosynthesis. Functionally, O-methyltransferase that catalyzes the 2 O-methylation steps in the ubiquinone biosynthetic pathway. This Brucella anthropi (strain ATCC 49188 / DSM 6882 / CCUG 24695 / JCM 21032 / LMG 3331 / NBRC 15819 / NCTC 12168 / Alc 37) (Ochrobactrum anthropi) protein is Ubiquinone biosynthesis O-methyltransferase.